A 432-amino-acid chain; its full sequence is MSSTTLTDDQIRDNERTEVLAKATAAKNIVPDIAVLGTGPKNAILRAAADELVARSAEIIEANASDIEAGRANGMEESMIDRLALDESRIEGIAGGLRQVAGLTDPVGEVLRGHVMENGIQMKQVRVPLGVMGMVYEARPNVTVDAFALALKSGNVAFVRGSSTAVHSNTKLVEILQDVLERFELPRETVQLLPCQTRGSVQDLITARGLVDVVIPRGGAGLINAVVTGATVPTIETGTGNCHFYIDAEAKLGQAIAMVINGKTRRCSVCNATETALLDAALSDSDKLAVVQALQEAGVTIHGRVAELEAFGATDVVEATETDWDSEYLSFDIAVAVVDGVDGALAHIAKYSTKHTEAIATQNIETAQRFADRVDAAAVMINASTAYTDGEQYGMGAEIGISTQKLHARGPMALPELTSTKWILQGTGQIRP.

Belongs to the gamma-glutamyl phosphate reductase family.

Its subcellular location is the cytoplasm. It carries out the reaction L-glutamate 5-semialdehyde + phosphate + NADP(+) = L-glutamyl 5-phosphate + NADPH + H(+). The protein operates within amino-acid biosynthesis; L-proline biosynthesis; L-glutamate 5-semialdehyde from L-glutamate: step 2/2. In terms of biological role, catalyzes the NADPH-dependent reduction of L-glutamate 5-phosphate into L-glutamate 5-semialdehyde and phosphate. The product spontaneously undergoes cyclization to form 1-pyrroline-5-carboxylate. In Corynebacterium melassecola, this protein is Gamma-glutamyl phosphate reductase.